The chain runs to 325 residues: Protease HtpX homolog (325 aa).

Residues 20–40 traverse the membrane as a helical segment; the sequence is IGYLLGGGGGMMIALVIAVAM. His130 is a Zn(2+) binding site. Glu131 is a catalytic residue. Position 134 (His134) interacts with Zn(2+). Helical transmembrane passes span 145-165 and 173-193; these read IVATLAGAISMLGNFAFFLGG and VMGVVGTLLAMIVAPFGAMIV. Glu202 is a binding site for Zn(2+). The tract at residues 288-325 is disordered; the sequence is AMTARAAAPSQNSGPWGQRSDNAGGNSNGGSRYRGPWS. Residues 306 to 325 show a composition bias toward low complexity; it reads RSDNAGGNSNGGSRYRGPWS.

It belongs to the peptidase M48B family. It depends on Zn(2+) as a cofactor.

The protein resides in the cell inner membrane. This is Protease HtpX homolog from Brucella abortus (strain S19).